The primary structure comprises 678 residues: UvrABC system protein B (678 aa).

One can recognise a Helicase ATP-binding domain in the interval 31 to 417 (ENLNDGLAHQ…KSGTEIIDQV (387 aa)). 44-51 (GVTGSGKT) contributes to the ATP binding site. The short motif at 97 to 120 (YYDYYQPEAYVPSSDTFIEKDASI) is the Beta-hairpin element. The 167-residue stretch at 436–602 (QVDDLLSEAR…GLNKKVGELL (167 aa)) folds into the Helicase C-terminal domain. Residues 603-625 (DIGQGGSNKSRNKPRSQKAAEPA) form a disordered region. Positions 638–673 (QQQIKKLEQQMYKFAQDLEFEKAAAIRDQLHKLREQ) constitute a UVR domain.

Belongs to the UvrB family. In terms of assembly, forms a heterotetramer with UvrA during the search for lesions. Interacts with UvrC in an incision complex.

It is found in the cytoplasm. Its function is as follows. The UvrABC repair system catalyzes the recognition and processing of DNA lesions. A damage recognition complex composed of 2 UvrA and 2 UvrB subunits scans DNA for abnormalities. Upon binding of the UvrA(2)B(2) complex to a putative damaged site, the DNA wraps around one UvrB monomer. DNA wrap is dependent on ATP binding by UvrB and probably causes local melting of the DNA helix, facilitating insertion of UvrB beta-hairpin between the DNA strands. Then UvrB probes one DNA strand for the presence of a lesion. If a lesion is found the UvrA subunits dissociate and the UvrB-DNA preincision complex is formed. This complex is subsequently bound by UvrC and the second UvrB is released. If no lesion is found, the DNA wraps around the other UvrB subunit that will check the other stand for damage. The polypeptide is UvrABC system protein B (Mannheimia succiniciproducens (strain KCTC 0769BP / MBEL55E)).